The primary structure comprises 213 residues: MRDSMSEADRSSPGSGKTDREDETAENATQDVIAVTPDDERTGLANRLDAHTGDGVRHRAFTCLLFDEDGRVLLAQRADRKRLWDTHWDGTVASHPIEGQSQVDATRQRLAEELGIEPHQYDKLEITDRFEYKRRYLDEGLEWEVCAVLQATLHDTSFDRDPEEVGGAMWVDYEDLYENPRYYRQLRLCPWFEIAMRRDFEGDADPVPDGTRA.

Over residues 1–10 the composition is skewed to basic and acidic residues; sequence MRDSMSEADR. Residues 1-34 form a disordered region; the sequence is MRDSMSEADRSSPGSGKTDREDETAENATQDVIA. Mn(2+) contacts are provided by H51, H58, and H95. Residues 56-193 form the Nudix hydrolase domain; it reads VRHRAFTCLL…RQLRLCPWFE (138 aa). Mg(2+) is bound at residue E113. Residues E142 and E144 each coordinate Mn(2+). The active site involves E144.

This sequence belongs to the IPP isomerase type 1 family. The cofactor is Mg(2+). Requires Mn(2+) as cofactor.

Its subcellular location is the cytoplasm. It carries out the reaction isopentenyl diphosphate = dimethylallyl diphosphate. It functions in the pathway isoprenoid biosynthesis; dimethylallyl diphosphate biosynthesis; dimethylallyl diphosphate from isopentenyl diphosphate: step 1/1. In terms of biological role, catalyzes the 1,3-allylic rearrangement of the homoallylic substrate isopentenyl (IPP) to its highly electrophilic allylic isomer, dimethylallyl diphosphate (DMAPP). The polypeptide is Isopentenyl-diphosphate Delta-isomerase (Halobacterium salinarum (strain ATCC 700922 / JCM 11081 / NRC-1) (Halobacterium halobium)).